Here is a 274-residue protein sequence, read N- to C-terminus: 2,3,4,5-tetrahydropyridine-2,6-dicarboxylate N-succinyltransferase (274 aa).

Arg-106 and Asp-143 together coordinate substrate.

Belongs to the transferase hexapeptide repeat family. In terms of assembly, homotrimer.

It is found in the cytoplasm. It catalyses the reaction (S)-2,3,4,5-tetrahydrodipicolinate + succinyl-CoA + H2O = (S)-2-succinylamino-6-oxoheptanedioate + CoA. Its pathway is amino-acid biosynthesis; L-lysine biosynthesis via DAP pathway; LL-2,6-diaminopimelate from (S)-tetrahydrodipicolinate (succinylase route): step 1/3. This chain is 2,3,4,5-tetrahydropyridine-2,6-dicarboxylate N-succinyltransferase, found in Rickettsia typhi (strain ATCC VR-144 / Wilmington).